The following is a 413-amino-acid chain: uncharacterized protein (413 aa).

The signal sequence occupies residues 1–22 (MKKSKASALLWLFSLVGFMLHA).

The protein localises to the periplasm. May be involved in ulvan degradation. Ulvan is the main polysaccharide component of the Ulvales (green seaweed) cell wall. It is composed of disaccharide building blocks comprising 3-sulfated rhamnose (Rha3S) linked to D-glucuronic acid (GlcA), L-iduronic acid (IduA), or D-xylose (Xyl). This is an uncharacterized protein from Formosa agariphila (strain DSM 15362 / KCTC 12365 / LMG 23005 / KMM 3901 / M-2Alg 35-1).